Consider the following 683-residue polypeptide: MRWQRLAEEVREHQFRYYVRDAPIISDGEFDALLRELQELEDRHPDLRTPDSPTQLVGGGFATDFTPVDHLERMLSLDNVFDVDELRAWAARVEAETGPDLHYLCEVKIDGVALNLVYERGKLVRAATRGDGRTGEDVTLNARTIEDVPGELSAGGEFPVPELLEVRGEVYLRLADFEALNAAIVAEGKPPYANPRNTAAGSLRQKDPAVTARRRLRMICHGLGRIEGYTPASQFEAYRALSAWGLPVSEHTRRVRGIDAVIERVAYWGEHRHDIEHEIDGQVIKVDETSLQRRLGATSRAPRWAIAYKYPPEEATTKLRAIEVNVGRTGRVTPFAVMEPVVIAGSTVAMATLHNASEVKRKGVLIGDTVTIRKAGDVIPEVLGPVVDARTGAEREFVMPTHCPECGTELAPEKEGDADIRCPNQRSCPAQLRERVYHVAGRSAFDIEALGYEAAIDLLQSGAIGDEGDLFDLDEARLLTTSLFTNKNGSLSANGKRLLENLDAAKDRPLWRVLVGLSIRHVGPTAARALAAEFGSMERIEQASVDELAATDGVGPTIAAAVAEWFTVDWHRAIVAKWRAAGVRMVDERDESIERTLEGLSIVVTGSLQGFSRDGAKEAILARGGKAAGSVSKKTAFVVVGDAPGAKAAKAEELGVPILDEEGFVRLLAEGPAAVAAEEPESG.

Residues 27-31, 76-77, and Glu106 contribute to the NAD(+) site; these read DGEFD and SL. The active-site N6-AMP-lysine intermediate is the Lys108. Positions 129, 169, 285, and 309 each coordinate NAD(+). Residues Cys403, Cys406, Cys422, and Cys428 each coordinate Zn(2+). One can recognise a BRCT domain in the interval 592–681; that stretch reads SIERTLEGLS…PAAVAAEEPE (90 aa).

It belongs to the NAD-dependent DNA ligase family. LigA subfamily. The cofactor is Mg(2+). Requires Mn(2+) as cofactor.

It catalyses the reaction NAD(+) + (deoxyribonucleotide)n-3'-hydroxyl + 5'-phospho-(deoxyribonucleotide)m = (deoxyribonucleotide)n+m + AMP + beta-nicotinamide D-nucleotide.. In terms of biological role, DNA ligase that catalyzes the formation of phosphodiester linkages between 5'-phosphoryl and 3'-hydroxyl groups in double-stranded DNA using NAD as a coenzyme and as the energy source for the reaction. It is essential for DNA replication and repair of damaged DNA. The sequence is that of DNA ligase 2 from Nocardia farcinica (strain IFM 10152).